The chain runs to 245 residues: Adenosylcobinamide-GDP ribazoletransferase (245 aa).

The next 5 helical transmembrane spans lie at 31-51 (LLHYPAVGLFLGALLWLAALL), 57-77 (PLLQAALLLALWVALTGALHL), 109-129 (VAVVVLVIMLLLKFSALLVVL), 134-154 (PAALVLAPLLGRAALLALFLC), and 176-196 (ALMVLALVVIGCLLLGATGLL).

This sequence belongs to the CobS family. The cofactor is Mg(2+).

It localises to the cell inner membrane. The catalysed reaction is alpha-ribazole + adenosylcob(III)inamide-GDP = adenosylcob(III)alamin + GMP + H(+). It carries out the reaction alpha-ribazole 5'-phosphate + adenosylcob(III)inamide-GDP = adenosylcob(III)alamin 5'-phosphate + GMP + H(+). It functions in the pathway cofactor biosynthesis; adenosylcobalamin biosynthesis; adenosylcobalamin from cob(II)yrinate a,c-diamide: step 7/7. In terms of biological role, joins adenosylcobinamide-GDP and alpha-ribazole to generate adenosylcobalamin (Ado-cobalamin). Also synthesizes adenosylcobalamin 5'-phosphate from adenosylcobinamide-GDP and alpha-ribazole 5'-phosphate. The sequence is that of Adenosylcobinamide-GDP ribazoletransferase from Stutzerimonas stutzeri (strain A1501) (Pseudomonas stutzeri).